A 193-amino-acid polypeptide reads, in one-letter code: MRGRDEDTGEFRGASRSQQRREALEIFDLGEKLVALTPAQLAKLPVPESLIPHIEESKRITSHIAHKRQLAFLAKHMRREDDETLAAIRDALDANSDTARREVAAIHRVERWRERLLADGDAALAELLEAYPAADRQQLRQLVRNAIHERAKNKPPRAYRELFQVLRDLSQEQGLESGDSGLEDGESALEDDE.

A compositionally biased stretch (basic and acidic residues) spans 1–10 (MRGRDEDTGE). 2 disordered regions span residues 1-20 (MRGR…SQQR) and 171-193 (QEQG…EDDE). Acidic residues predominate over residues 181 to 193 (GLEDGESALEDDE).

Belongs to the DarP family.

It localises to the cytoplasm. Its function is as follows. Member of a network of 50S ribosomal subunit biogenesis factors which assembles along the 30S-50S interface, preventing incorrect 23S rRNA structures from forming. Promotes peptidyl transferase center (PTC) maturation. In Xanthomonas oryzae pv. oryzae (strain MAFF 311018), this protein is Dual-action ribosomal maturation protein DarP.